The sequence spans 437 residues: Glutamyl-tRNA reductase (437 aa).

Residues 49 to 52, Ser-109, 114 to 116, and Gln-120 each bind substrate; these read TCNR and ETQ. The active-site Nucleophile is the Cys-50. 189 to 194 contributes to the NADP(+) binding site; sequence GAGKMS.

This sequence belongs to the glutamyl-tRNA reductase family. In terms of assembly, homodimer.

The catalysed reaction is (S)-4-amino-5-oxopentanoate + tRNA(Glu) + NADP(+) = L-glutamyl-tRNA(Glu) + NADPH + H(+). It functions in the pathway porphyrin-containing compound metabolism; protoporphyrin-IX biosynthesis; 5-aminolevulinate from L-glutamyl-tRNA(Glu): step 1/2. Catalyzes the NADPH-dependent reduction of glutamyl-tRNA(Glu) to glutamate 1-semialdehyde (GSA). This is Glutamyl-tRNA reductase from Paenibacillus macerans (Bacillus macerans).